A 184-amino-acid chain; its full sequence is ATP synthase subunit b, chloroplastic (184 aa).

The chain crosses the membrane as a helical span at residues 27–49; the sequence is LATNPINLSVVLGVLVFFGKGVL.

The protein belongs to the ATPase B chain family. F-type ATPases have 2 components, F(1) - the catalytic core - and F(0) - the membrane proton channel. F(1) has five subunits: alpha(3), beta(3), gamma(1), delta(1), epsilon(1). F(0) has four main subunits: a(1), b(1), b'(1) and c(10-14). The alpha and beta chains form an alternating ring which encloses part of the gamma chain. F(1) is attached to F(0) by a central stalk formed by the gamma and epsilon chains, while a peripheral stalk is formed by the delta, b and b' chains.

It is found in the plastid. The protein localises to the chloroplast thylakoid membrane. F(1)F(0) ATP synthase produces ATP from ADP in the presence of a proton or sodium gradient. F-type ATPases consist of two structural domains, F(1) containing the extramembraneous catalytic core and F(0) containing the membrane proton channel, linked together by a central stalk and a peripheral stalk. During catalysis, ATP synthesis in the catalytic domain of F(1) is coupled via a rotary mechanism of the central stalk subunits to proton translocation. Its function is as follows. Component of the F(0) channel, it forms part of the peripheral stalk, linking F(1) to F(0). In Phaseolus vulgaris (Kidney bean), this protein is ATP synthase subunit b, chloroplastic.